Consider the following 305-residue polypeptide: tRNA dimethylallyltransferase (305 aa).

An ATP-binding site is contributed by 8–15 (GPTAVGKT). 10-15 (TAVGKT) is a binding site for substrate. Residues 33–36 (DSRQ) form an interaction with substrate tRNA region.

This sequence belongs to the IPP transferase family. In terms of assembly, monomer. Requires Mg(2+) as cofactor.

It catalyses the reaction adenosine(37) in tRNA + dimethylallyl diphosphate = N(6)-dimethylallyladenosine(37) in tRNA + diphosphate. Catalyzes the transfer of a dimethylallyl group onto the adenine at position 37 in tRNAs that read codons beginning with uridine, leading to the formation of N6-(dimethylallyl)adenosine (i(6)A). The polypeptide is tRNA dimethylallyltransferase (Thermotoga sp. (strain RQ2)).